A 257-amino-acid polypeptide reads, in one-letter code: MLPSDLVNYKKKSRKIIALTAWDSISGSIAEQANVDLVLVGDSLAMVCLGYKSTLPLTLENIIYHTNAVSRGFKKKIEEQPLVVSDMPFLTYQCGEDKAVEYAGKIIQSTYAKAVKVEGAEPEIQKVISRLIRMGIPVMGHIGLTPQSYLNIGLRKQGESLASQEKIKKEASILEELGCFSIVLEHIPDLLAKEIKNSLTIPIIGIGAGNYCDGQVRVTADLLGLNDDQPPFCQPIIQGKKLFKDKLKEWVDSERLN.

Mg(2+) contacts are provided by aspartate 42 and aspartate 86. Residues 42–43 (DS), aspartate 86, and lysine 116 contribute to the 3-methyl-2-oxobutanoate site. Residue glutamate 118 coordinates Mg(2+). The Proton acceptor role is filled by glutamate 185.

It belongs to the PanB family. As to quaternary structure, homodecamer; pentamer of dimers. The cofactor is Mg(2+).

It is found in the cytoplasm. The enzyme catalyses 3-methyl-2-oxobutanoate + (6R)-5,10-methylene-5,6,7,8-tetrahydrofolate + H2O = 2-dehydropantoate + (6S)-5,6,7,8-tetrahydrofolate. Its pathway is cofactor biosynthesis; (R)-pantothenate biosynthesis; (R)-pantoate from 3-methyl-2-oxobutanoate: step 1/2. Functionally, catalyzes the reversible reaction in which hydroxymethyl group from 5,10-methylenetetrahydrofolate is transferred onto alpha-ketoisovalerate to form ketopantoate. The polypeptide is 3-methyl-2-oxobutanoate hydroxymethyltransferase (Prochlorococcus marinus (strain AS9601)).